The primary structure comprises 172 residues: Female-specific lacrimal gland protein (172 aa).

The signal sequence occupies residues 1 to 16; that stretch reads MVKFLLLALALGVSCA. 2 cysteine pairs are disulfide-bonded: Cys-60/Cys-64 and Cys-79/Cys-170.

The protein belongs to the calycin superfamily. Lipocalin family. In terms of tissue distribution, expressed in the lacrimal gland from where it is secreted into tears (at protein level).

The protein resides in the secreted. This Mesocricetus auratus (Golden hamster) protein is Female-specific lacrimal gland protein.